We begin with the raw amino-acid sequence, 1073 residues long: Self-sufficient cytochrome P450 monooxygenase CYP505AG1 (1073 aa).

Residue Cys409 coordinates heme. Positions 501 to 644 constitute a Flavodoxin-like domain; the sequence is VTILYGSNSG…DLENWEDEHL (144 aa). Residues 507 to 511 and 588 to 620 each bind FMN; these read SNSGT and VFAC…HRVA. Residues 680 to 909 enclose the FAD-binding FR-type domain; the sequence is HNAVECIVSE…RPCKKQFHLP (230 aa).

It in the N-terminal section; belongs to the cytochrome P450 family. Requires FAD as cofactor. FMN is required as a cofactor. Heme serves as cofactor.

The enzyme catalyses 2 oxidized [cytochrome P450] + NADPH = 2 reduced [cytochrome P450] + NADP(+) + H(+). It carries out the reaction an organic molecule + reduced [NADPH--hemoprotein reductase] + O2 = an alcohol + oxidized [NADPH--hemoprotein reductase] + H2O + H(+). The catalysed reaction is dodecanoate + reduced [NADPH--hemoprotein reductase] + O2 = 10-hydroxydodecanoate + oxidized [NADPH--hemoprotein reductase] + H2O + H(+). It catalyses the reaction tetradecanoate + reduced [NADPH--hemoprotein reductase] + O2 = 12-hydroxytetradecanoate + oxidized [NADPH--hemoprotein reductase] + H2O + H(+). In terms of biological role, self-sufficient cytochrome P450 monooxygenase that catalyzes the regioselective in-chain hydroxylation of alkanes, fatty alcohols, and fatty acids, giving sub-terminal hydroxylation by acting preferentially on the omega-2 position. Prefers fatty acids as substrates, since it hydroxylates the small amounts of dodecanoic acid formed in the presence of an excess of 1-dodecanol. In Oidiodendron maius (strain Zn), this protein is Self-sufficient cytochrome P450 monooxygenase CYP505AG1.